The chain runs to 94 residues: uncharacterized protein (94 aa).

A signal peptide spans 1 to 22 (MIMKNCLLLGALLMGFTGVAMA).

This is an uncharacterized protein from Escherichia coli (strain K12).